Consider the following 185-residue polypeptide: Ribosome-recycling factor (185 aa).

The segment at 138 to 185 (ALKKQEKDGEITEDEERRLEKEVQKVTDESTKKIDQMADNKRKEIIQG) is disordered.

It belongs to the RRF family.

The protein resides in the cytoplasm. In terms of biological role, responsible for the release of ribosomes from messenger RNA at the termination of protein biosynthesis. May increase the efficiency of translation by recycling ribosomes from one round of translation to another. In Lactobacillus delbrueckii subsp. bulgaricus (strain ATCC 11842 / DSM 20081 / BCRC 10696 / JCM 1002 / NBRC 13953 / NCIMB 11778 / NCTC 12712 / WDCM 00102 / Lb 14), this protein is Ribosome-recycling factor.